Reading from the N-terminus, the 280-residue chain is Urease accessory protein UreD 3 (280 aa).

It belongs to the UreD family. In terms of assembly, ureD, UreF and UreG form a complex that acts as a GTP-hydrolysis-dependent molecular chaperone, activating the urease apoprotein by helping to assemble the nickel containing metallocenter of UreC. The UreE protein probably delivers the nickel.

It localises to the cytoplasm. Its function is as follows. Required for maturation of urease via the functional incorporation of the urease nickel metallocenter. The sequence is that of Urease accessory protein UreD 3 from Bradyrhizobium sp. (strain ORS 278).